Consider the following 409-residue polypeptide: Transcription termination factor 3, mitochondrial (409 aa).

A mitochondrion-targeting transit peptide spans 1 to 64 (MALLAQQLSR…KTDRALFSWS (64 aa)). Residues 74–93 (RKSSTNSTLLPSVSEQPEKI) form a disordered region.

The protein belongs to the mTERF family.

It localises to the mitochondrion. Binds promoter DNA and regulates initiation of transcription. Required for normal mitochondrial transcription and translation, and for normal assembly of mitochondrial respiratory complexes. Required for normal mitochondrial function. Maintains 16S rRNA levels and functions in mitochondrial ribosome assembly by regulating the biogenesis of the 39S ribosomal subunit. This is Transcription termination factor 3, mitochondrial (Mterf3) from Rattus norvegicus (Rat).